Here is a 258-residue protein sequence, read N- to C-terminus: tRNA (guanine-N(7)-)-methyltransferase (258 aa).

Residues Gly-76, 99–100 (EI), 132–133 (NA), and Leu-152 contribute to the S-adenosyl-L-methionine site. Asp-155 is a catalytic residue. 230-232 (TEE) provides a ligand contact to S-adenosyl-L-methionine.

Belongs to the class I-like SAM-binding methyltransferase superfamily. TrmB family.

Its subcellular location is the nucleus. The enzyme catalyses guanosine(46) in tRNA + S-adenosyl-L-methionine = N(7)-methylguanosine(46) in tRNA + S-adenosyl-L-homocysteine. It participates in tRNA modification; N(7)-methylguanine-tRNA biosynthesis. Its function is as follows. Catalyzes the formation of N(7)-methylguanine at position 46 (m7G46) in tRNA. In Brugia malayi (Filarial nematode worm), this protein is tRNA (guanine-N(7)-)-methyltransferase.